Reading from the N-terminus, the 187-residue chain is Probable GTP-binding protein EngB (187 aa).

An EngB-type G domain is found at 18-187 (KNSEIAFWGR…KLKENINSNF (170 aa)). Residues 26–33 (GRSNVGKS), 52–56 (GRTQL), 70–73 (DLPG), 137–140 (TKID), and 168–170 (VSS) each bind GTP. Mg(2+) contacts are provided by S33 and T54.

Belongs to the TRAFAC class TrmE-Era-EngA-EngB-Septin-like GTPase superfamily. EngB GTPase family. The cofactor is Mg(2+).

In terms of biological role, necessary for normal cell division and for the maintenance of normal septation. This is Probable GTP-binding protein EngB from Mycoplasmopsis synoviae (strain 53) (Mycoplasma synoviae).